A 447-amino-acid chain; its full sequence is MDTYMEEREAGRLEIYSVKRNVLNMFSIVIVSATYSISLDSTVLYPAVYHAIVNQPMLGARIHNCHSKIPIVKKLKTIDLDKVVKYADDQKVDSFCNNALQNFKLCYDDETLPLWMVYVLNDKSELVFIYDHSLFDGGSGPLFHKYVLEGLQMSKTNFSSSTVPVSELPLPKNLEKLIDVHPSWFCLMKALWTNSGLPFSKGFRSPSYKGHAPVRPFSSHTIFFSISNAVVKNIKQLSKNIDASFTSIFYSVFMLSIYYAIAKNGKVNLDMLIDVNARRFLPVAKQTMGNYVFSYVHHLNGFQPSQRQEDYKHTMVDLATEFSHRLKAALSNPREMSQQIGLLSYIDIEDYLLKSCEKTRGNTAEISNLGYFSFPADSSVKIKNMAFAQPCSSLSAPFVLNVITVADGPCSFSLSIFDDGNTEQTHELAIKIRDKFLSILEKVSMNS.

3 helical membrane passes run 28 to 48, 241 to 261, and 397 to 417; these read IVIV…YPAV, IDAS…YYAI, and PFVL…LSIF.

It localises to the membrane. This is an uncharacterized protein from Schizosaccharomyces pombe (strain 972 / ATCC 24843) (Fission yeast).